The chain runs to 420 residues: Serine/threonine-protein phosphatase 4 regulatory subunit 2-A (420 aa).

Positions G157–D420 are disordered. Positions S182–S195 are enriched in polar residues. Residues T196–V210 show a composition bias toward basic and acidic residues. Residues E212–A224 show a composition bias toward low complexity. Positions H229–K250 are enriched in basic and acidic residues. The span at E251–D266 shows a compositional bias: acidic residues. Basic and acidic residues predominate over residues E267–H276. A compositionally biased stretch (polar residues) spans P278–V296. Residues G318–H332 show a composition bias toward basic and acidic residues. Residues A346–N364 are compositionally biased toward acidic residues. Low complexity predominate over residues S368–E394. Residues E411–D420 show a composition bias toward acidic residues.

Belongs to the PPP4R2 family. As to quaternary structure, serine/threonine-protein phosphatase 4 (PP4) occurs in different assemblies of the catalytic and one or more regulatory subunits.

Regulatory subunit of serine/threonine-protein phosphatase 4 (PP4C). This Danio rerio (Zebrafish) protein is Serine/threonine-protein phosphatase 4 regulatory subunit 2-A (ppp4r2a).